Consider the following 638-residue polypeptide: Methylmalonyl-CoA mutase small subunit (638 aa).

The segment covering 1–11 has biased composition (polar residues); that stretch reads MSSTDQGTNPA. The segment at 1–34 is disordered; that stretch reads MSSTDQGTNPADTDDLTPTTLSLAGDFPKATEEQ.

The protein belongs to the methylmalonyl-CoA mutase family. As to quaternary structure, heterodimer of an alpha and a beta chain. Adenosylcob(III)alamin serves as cofactor.

It catalyses the reaction (R)-methylmalonyl-CoA = succinyl-CoA. Its pathway is metabolic intermediate metabolism; propanoyl-CoA degradation; succinyl-CoA from propanoyl-CoA: step 3/3. Catalyzes the isomerization of succinyl-CoA to methylmalonyl-CoA during synthesis of propionate from tricarboxylic acid-cycle intermediates. The chain is Methylmalonyl-CoA mutase small subunit (mutA) from Propionibacterium freudenreichii subsp. shermanii.